Here is a 130-residue protein sequence, read N- to C-terminus: Small ribosomal subunit protein uS11 (130 aa).

This sequence belongs to the universal ribosomal protein uS11 family. In terms of assembly, part of the 30S ribosomal subunit. Interacts with proteins S7 and S18. Binds to IF-3.

Functionally, located on the platform of the 30S subunit, it bridges several disparate RNA helices of the 16S rRNA. Forms part of the Shine-Dalgarno cleft in the 70S ribosome. In Alkalilimnicola ehrlichii (strain ATCC BAA-1101 / DSM 17681 / MLHE-1), this protein is Small ribosomal subunit protein uS11.